The chain runs to 1663 residues: TPR repeat-containing protein DDB_G0287407 (1663 aa).

2 disordered regions span residues 84–109 and 326–359; these read RKTQ…QKGQ and SEYS…NSNQ. Positions 89–105 are enriched in low complexity; it reads TSSNGSTSTTTTTTTTT. The segment covering 333 to 352 has biased composition (acidic residues); sequence DDGENDQSDDDDDNEDDDDF. TPR repeat units lie at residues 1110–1143, 1150–1183, 1192–1225, 1234–1269, 1278–1311, and 1320–1353; these read SDVW…YINN, AKVD…YTKE, AITL…CESK, ADIA…TESK, ARIL…YEAR, and SQIL…TKKI. Disordered stretches follow at residues 1500–1528 and 1544–1571; these read VAQP…QQQR and QKVS…RQNT. Residues 1516 to 1547 are a coiled coil; the sequence is RTQQAIQQGQQQRQQVQQQQQQVQQQMSQKVS. Composition is skewed to low complexity over residues 1518–1528 and 1544–1563; these read QQAIQQGQQQR and QKVS…QPSQ.

The protein is TPR repeat-containing protein DDB_G0287407 of Dictyostelium discoideum (Social amoeba).